Reading from the N-terminus, the 118-residue chain is Thioredoxin H-type 2 (118 aa).

Residues 2–113 (AEEGQVIGVH…LQQTIAKHIS (112 aa)) form the Thioredoxin domain. Active-site nucleophile residues include Cys39 and Cys42. A disulfide bond links Cys39 and Cys42.

The protein belongs to the thioredoxin family. Plant H-type subfamily.

The protein resides in the cytoplasm. Functionally, participates in various redox reactions through the reversible oxidation of the active center dithiol to a disulfide. The H form is known to activate a number of cytosolic enzymes. This chain is Thioredoxin H-type 2, found in Nicotiana tabacum (Common tobacco).